Reading from the N-terminus, the 201-residue chain is Inner membrane protein YnbA (201 aa).

The Periplasmic segment spans residues 1-43 (MTLYQIKPLFQSLLRPTMFWLYKHHVTANHITLAALALSLLTG). Residues 44 to 64 (LLLMLAAQPILFLLLPIVLFI) traverse the membrane as a helical segment. Topologically, residues 65-84 (RMALNALDGMLARECNQQTR) are cytoplasmic. A helical membrane pass occupies residues 85–107 (LGAILNETGDVISDIALYLPFLF). Over 108–116 (LPESNASLV) the chain is Periplasmic. A helical membrane pass occupies residues 117-139 (ILMLFCTILTEFCGLLAQTINGV). Residues 140–151 (RSYAGPFGKSDR) are Cytoplasmic-facing. The chain crosses the membrane as a helical span at residues 152 to 172 (ALIFGLWGLAVAIYPQWMQWN). Residues 173-175 (NLL) lie on the Periplasmic side of the membrane. The chain crosses the membrane as a helical span at residues 176 to 196 (WSIASILLLWTAINRCRSVLL). Residues 197-201 (MSAEI) are Cytoplasmic-facing.

It is found in the cell inner membrane. The polypeptide is Inner membrane protein YnbA (ynbA) (Escherichia coli (strain K12)).